Reading from the N-terminus, the 180-residue chain is Cell wall / vacuolar inhibitor of fructosidase 2 (180 aa).

The first 23 residues, 1-23 (MASSLIFLLLVTLTFSASTLISA), serve as a signal peptide directing secretion. N26 is a glycosylation site (N-linked (GlcNAc...) asparagine). A disulfide bridge connects residues C35 and C44. N73 and N84 each carry an N-linked (GlcNAc...) asparagine glycan. C101 and C141 form a disulfide bridge.

It belongs to the PMEI family. Mostly expressed at low levels in seedlings, stems, leaves and flowers (in all organs), and, to a lower extent, in roots and siliques.

It localises to the vacuole. Inhibits fructosidases from both cell wall (cell wall invertase CWI) and vacuoles (vacuolar invertase VI). The polypeptide is Cell wall / vacuolar inhibitor of fructosidase 2 (C/VIF2) (Arabidopsis thaliana (Mouse-ear cress)).